A 644-amino-acid chain; its full sequence is Exoribonuclease 2 (644 aa).

Residues 189 to 516 (REDLTALDFV…NHRLLKAVIK (328 aa)) form the RNB domain. The S1 motif domain occupies 561-643 (DTRFAAEIVD…ETRSIIARPV (83 aa)).

The protein belongs to the RNR ribonuclease family. RNase II subfamily.

It localises to the cytoplasm. The catalysed reaction is Exonucleolytic cleavage in the 3'- to 5'-direction to yield nucleoside 5'-phosphates.. Functionally, involved in mRNA degradation. Hydrolyzes single-stranded polyribonucleotides processively in the 3' to 5' direction. The sequence is that of Exoribonuclease 2 from Shigella dysenteriae serotype 1 (strain Sd197).